Here is a 267-residue protein sequence, read N- to C-terminus: tRNA pseudouridine synthase A (267 aa).

The active-site Nucleophile is Asp-55. Tyr-111 is a binding site for substrate.

Belongs to the tRNA pseudouridine synthase TruA family.

The catalysed reaction is uridine(38/39/40) in tRNA = pseudouridine(38/39/40) in tRNA. Its function is as follows. Formation of pseudouridine at positions 38, 39 and 40 in the anticodon stem and loop of transfer RNAs. This Thermococcus gammatolerans (strain DSM 15229 / JCM 11827 / EJ3) protein is tRNA pseudouridine synthase A.